The chain runs to 314 residues: Olfactory receptor 5P51 (314 aa).

Over 1–28 the chain is Extracellular; sequence MAFLEDGNHTAVTEFVLFGLTDDPVLRV. An N-linked (GlcNAc...) asparagine glycan is attached at Asn-8. Residues 29–49 form a helical membrane-spanning segment; sequence ILFIIFLCIYLVNVSGNLSTI. Residues 50–57 lie on the Cytoplasmic side of the membrane; that stretch reads LLIRVSSQ. Residues 58–78 form a helical membrane-spanning segment; it reads LHHPMYFFLSHLASVDVGYSS. Residues 79–102 lie on the Extracellular side of the membrane; it reads TVTPKMLANFLLERSTISYLGCTI. The cysteines at positions 100 and 192 are disulfide-linked. A helical transmembrane segment spans residues 103-123; the sequence is QLFSGAFVGTLECFLLATMAY. Over 124 to 136 the chain is Cytoplasmic; that stretch reads DRFIAICNPLLYS. Residues 137–157 form a helical membrane-spanning segment; the sequence is TKMSTQVCIQLLVGSYIGGFL. Residues 158-199 lie on the Extracellular side of the membrane; the sequence is NASSFLLSFFPLLFCGPNRVNHYSCDLTPLIELSCSGSNVPI. A helical transmembrane segment spans residues 200-220; the sequence is VPASFCSAFVIIVTVSVIAIS. The Cytoplasmic segment spans residues 221–240; that stretch reads YTYILITILKMRSTEGRQKA. Residues 241-261 traverse the membrane as a helical segment; the sequence is FSTCTSHLTAVTLYYGTVTFI. Residues 262–274 are Extracellular-facing; sequence YVMPKSSYSTDQN. Residues 275–295 form a helical membrane-spanning segment; it reads KVVSVFYTVVIPMLNPIIYSL. At 296-314 the chain is on the cytoplasmic side; sequence RNNEIKGALKRQLARKIFS.

This sequence belongs to the G-protein coupled receptor 1 family.

The protein localises to the cell membrane. Potential odorant receptor. This is Olfactory receptor 5P51 from Mus musculus (Mouse).